The following is a 620-amino-acid chain: Proline--tRNA ligase (620 aa).

The protein belongs to the class-II aminoacyl-tRNA synthetase family. ProS type 1 subfamily. In terms of assembly, homodimer.

It localises to the cytoplasm. The enzyme catalyses tRNA(Pro) + L-proline + ATP = L-prolyl-tRNA(Pro) + AMP + diphosphate. Functionally, catalyzes the attachment of proline to tRNA(Pro) in a two-step reaction: proline is first activated by ATP to form Pro-AMP and then transferred to the acceptor end of tRNA(Pro). As ProRS can inadvertently accommodate and process non-cognate amino acids such as alanine and cysteine, to avoid such errors it has two additional distinct editing activities against alanine. One activity is designated as 'pretransfer' editing and involves the tRNA(Pro)-independent hydrolysis of activated Ala-AMP. The other activity is designated 'posttransfer' editing and involves deacylation of mischarged Ala-tRNA(Pro). The misacylated Cys-tRNA(Pro) is not edited by ProRS. In Streptococcus thermophilus (strain ATCC BAA-491 / LMD-9), this protein is Proline--tRNA ligase.